Reading from the N-terminus, the 291-residue chain is Beta-lactamase Toho-1 (291 aa).

Positions 1 to 29 (MMTQSIRRSMLTVMATLPLLFSSATLHAQ) are cleaved as a signal peptide. Ser-73 functions as the Acyl-ester intermediate in the catalytic mechanism. 237 to 239 (KTG) is a substrate binding site.

The protein belongs to the class-A beta-lactamase family. Monomer.

It catalyses the reaction a beta-lactam + H2O = a substituted beta-amino acid. Functionally, has strong cefotaxime-hydrolyzing activity. This is Beta-lactamase Toho-1 (bla) from Escherichia coli.